The sequence spans 739 residues: Catalase-peroxidase 1 (739 aa).

Residues 1–33 (MPEDRPIEDSPPIGEAQTDAPAGGCPAGFGRIK) are disordered. Residues 113–236 (WHAAGTYRVS…LAAVQMGLIY (124 aa)) constitute a cross-link (tryptophyl-tyrosyl-methioninium (Trp-Tyr) (with M-262)). The active-site Proton acceptor is the H114. A cross-link (tryptophyl-tyrosyl-methioninium (Tyr-Met) (with W-113)) is located at residues 236–262 (YVNPEGPNGNPDPQASAIDIRETFGRM). H277 lines the heme b pocket.

It belongs to the peroxidase family. Peroxidase/catalase subfamily. As to quaternary structure, homodimer or homotetramer. It depends on heme b as a cofactor. In terms of processing, formation of the three residue Trp-Tyr-Met cross-link is important for the catalase, but not the peroxidase activity of the enzyme.

It carries out the reaction H2O2 + AH2 = A + 2 H2O. It catalyses the reaction 2 H2O2 = O2 + 2 H2O. Its function is as follows. Bifunctional enzyme with both catalase and broad-spectrum peroxidase activity. May play a role in the intracellular survival of mycobacteria. The chain is Catalase-peroxidase 1 from Mycolicibacterium smegmatis (strain ATCC 700084 / mc(2)155) (Mycobacterium smegmatis).